Consider the following 205-residue polypeptide: MLAALEMKSSPTAPPAYAAIPSTNAALSVLQNAVASGTGANEVMRNEKAAYGAATEVLKDDETTRMLKMQVNEYSLAEMRAAYQKLKRQSRLLHYGELLCLALVLGLTFTLMASSTAAVLQSALQQVGITGHVVTGILTSLAIFLQHHRTRVLKRKRSVKRDIVKRMTYISLARRMGTRSPETGCRKVTSGLPHGASGGSGTRQG.

Residues 177–205 form a disordered region; the sequence is GTRSPETGCRKVTSGLPHGASGGSGTRQG. Gly residues predominate over residues 196–205; that stretch reads ASGGSGTRQG.

This sequence belongs to the orbivirus NS3 family.

May play a role in the release of virions from infected cells. The polypeptide is Non-structural protein NS3 (Segment-10) (Broadhaven virus (BRD)).